The following is a 470-amino-acid chain: Aromatic amino acid aminotransferase C569.07 (470 aa).

It belongs to the class-I pyridoxal-phosphate-dependent aminotransferase family. Requires pyridoxal 5'-phosphate as cofactor.

Its subcellular location is the cytoplasm. It catalyses the reaction an aromatic L-alpha-amino acid + 2-oxoglutarate = an aromatic oxo-acid + L-glutamate. Its function is as follows. Has aromatic amino acid transaminase activity. The sequence is that of Aromatic amino acid aminotransferase C569.07 from Schizosaccharomyces pombe (strain 972 / ATCC 24843) (Fission yeast).